A 284-amino-acid chain; its full sequence is Undecaprenyl-diphosphatase (284 aa).

8 helical membrane-spanning segments follow: residues 1-21 (MNWL…FLPV), 43-63 (ITAF…LYFW), 88-108 (YTLG…GLVF), 116-136 (LSSL…MWLG), 149-169 (IGIV…LFPG), 193-213 (LSFF…SVSA), 225-245 (VAIG…VAYV), and 259-279 (FTGF…LILS).

The protein belongs to the UppP family.

The protein resides in the cell membrane. The enzyme catalyses di-trans,octa-cis-undecaprenyl diphosphate + H2O = di-trans,octa-cis-undecaprenyl phosphate + phosphate + H(+). Its function is as follows. Catalyzes the dephosphorylation of undecaprenyl diphosphate (UPP). Confers resistance to bacitracin. The polypeptide is Undecaprenyl-diphosphatase (Cutibacterium acnes (strain DSM 16379 / KPA171202) (Propionibacterium acnes)).